Here is a 226-residue protein sequence, read N- to C-terminus: Apoptosis regulator OPG045 (226 aa).

Belongs to the orthopoxvirus OPG045 family. As to quaternary structure, homodimer. Interacts with host pro-apoptotic protein BCL2L11 (via BH3 domain). Interacts with host NLRP1. Interacts with host BAK.

It is found in the host mitochondrion outer membrane. The protein resides in the host cytoplasm. In terms of biological role, plays a role in evading host innate immune response by inhibiting host inflammasome activation. Interacts with and inhibits NLR-mediated interleukin-1 beta/IL1B production in infected cells. At the host mitochondria outer membrane, interacts with the BH3 domain of host BAK and prevents BAK from binding active BAX. In turn, host apoptosis is inhibited. The polypeptide is Apoptosis regulator OPG045 (OPG045) (Homo sapiens (Human)).